Here is a 293-residue protein sequence, read N- to C-terminus: Cell wall protein PGA31 (293 aa).

An N-terminal signal peptide occupies residues 1 to 18; it reads MKFLTAASLLTLSSSALA. An N-linked (GlcNAc...) asparagine glycan is attached at Asn131. The disordered stretch occupies residues 161–187; the sequence is ESASSSSSSAAPEPTASSSEAPKETPV. Residues 163–180 show a composition bias toward low complexity; that stretch reads ASSSSSSAAPEPTASSSE. N-linked (GlcNAc...) asparagine glycosylation occurs at Asn190. The interval 233-262 is disordered; it reads VPSKTASSEAAPPKTTVDSVSKPAPSGKKP. The GPI-anchor amidated glycine moiety is linked to residue Gly271. The propeptide at 272–293 is removed in mature form; that stretch reads AANALTGGSVAIAVAAAIGLVF.

The protein belongs to the SRP1/TIP1 family. Post-translationally, the GPI-anchor is attached to the protein in the endoplasmic reticulum and serves to target the protein to the cell surface. There, the glucosamine-inositol phospholipid moiety is cleaved off and the GPI-modified mannoprotein is covalently attached via its lipidless GPI glycan remnant to the 1,6-beta-glucan of the outer cell wall layer.

The protein resides in the secreted. Its subcellular location is the cell wall. It localises to the membrane. Component of the cell wall involved in virulence which plays a role in the relationship between C.albicans and the host. Involved in the regulation or assembly of chitin within the cell wall. This is Cell wall protein PGA31 (PGA31) from Candida albicans (strain SC5314 / ATCC MYA-2876) (Yeast).